A 285-amino-acid chain; its full sequence is Acetylglutamate kinase (285 aa).

Substrate-binding positions include 63 to 64, Arg85, and Asn178; that span reads GG.

The protein belongs to the acetylglutamate kinase family. ArgB subfamily.

The protein localises to the cytoplasm. It carries out the reaction N-acetyl-L-glutamate + ATP = N-acetyl-L-glutamyl 5-phosphate + ADP. Its pathway is amino-acid biosynthesis; L-arginine biosynthesis; N(2)-acetyl-L-ornithine from L-glutamate: step 2/4. Functionally, catalyzes the ATP-dependent phosphorylation of N-acetyl-L-glutamate. The sequence is that of Acetylglutamate kinase from Synechococcus sp. (strain CC9311).